A 689-amino-acid chain; its full sequence is Ribonuclease J (689 aa).

The interval 1 to 88 is disordered; sequence MTDNNQNNEN…RNYAQEELDS (88 aa). Basic and acidic residues predominate over residues 9–24; it reads ENHENSSENSKADEMR. Positions 56–78 are enriched in basic residues; it reads HHKKEHRPNKKPNNHHKQKHAKT. 2 positions are modified to N6-acetyllysine: Lys-132 and Lys-138. The Zn(2+) site is built by His-206, His-208, Asp-210, His-211, His-275, and Asp-297. N6-acetyllysine is present on residues Lys-321, Lys-335, and Lys-395. 498–502 lines the substrate pocket; that stretch reads HVSGH. N6-acetyllysine is present on Lys-509. His-524 contributes to the Zn(2+) binding site. N6-acetyllysine occurs at positions 545, 632, and 647.

Belongs to the metallo-beta-lactamase superfamily. RNA-metabolizing metallo-beta-lactamase-like family. Bacterial RNase J subfamily. Homodimer. Homotetramer; dimer of homodimers. Interacts with RNA helicase RhpA, might be a member of a minimal RNA degradosome complex. Zn(2+) serves as cofactor. In terms of processing, acetylated on nine lysine residues. Some of the residues are acetylated by multiple different mechanisms. RimL is partially responsible for the acetylation of Lys-321, Lys-395 and Lys-647. HPB8_1270 homolog is partially responsible for the acetylation of Lys-321, Lys-395, Lys-509 and Lys-647. Acetyl-phosphate-mediated non-enzymatic acetylation pathway takes part in the acetylation of Lys-132, Lys-321, Lys-395, Lys-509 and Lys-647. Acetylation of the remaining residues Lys-138, Lys-335, Lys-545 and Lys-632 occurs by a yet undetermined mechanism. Acetylation on a number of these residues is important for growth regulation and proper cell morphology.

The protein localises to the cytoplasm. With respect to regulation, catalytic activity is regulated by the balance between homodimers and homotetramers, with homotetramers being the active forms of this enzyme. Acetylation allosterically regulates the homooligomerization state and hence the catalytic activity. An RNase that has 5'-3' exoribonuclease and endoribonuclease activity. Degrades 5'-monophosphorylated ssRNA and dsRNA, considerably more active on ssRNA. Association with RhpA significantly increases the dsRNase activity. Degrades RNA substrate with hairpin structures at both ends with low activity, but presence of RhpA significantly increases the activity on this substrate. Stimulates ATPase activity of RNA helicase RhpA. Involved in stabilization of mRNA but apparently not rRNA. The polypeptide is Ribonuclease J (Helicobacter pylori (strain ATCC 700392 / 26695) (Campylobacter pylori)).